Here is a 337-residue protein sequence, read N- to C-terminus: Fructose-1,6-bisphosphatase class 1 (337 aa).

Residues E94, D116, L118, and D119 each coordinate Mg(2+). Substrate-binding positions include 119–122 (DGSS), N210, and K276. Position 282 (E282) interacts with Mg(2+).

It belongs to the FBPase class 1 family. In terms of assembly, homotetramer. Mg(2+) is required as a cofactor.

The protein localises to the cytoplasm. It carries out the reaction beta-D-fructose 1,6-bisphosphate + H2O = beta-D-fructose 6-phosphate + phosphate. It functions in the pathway carbohydrate biosynthesis; gluconeogenesis. In Burkholderia cenocepacia (strain HI2424), this protein is Fructose-1,6-bisphosphatase class 1.